The primary structure comprises 359 residues: ATP-dependent (S)-NAD(P)H-hydrate dehydratase (359 aa).

One can recognise a YjeF C-terminal domain in the interval 61 to 350 (LLEEARKVVP…SEINSVFVNN (290 aa)). (6S)-NADPHX is bound by residues Gly161 and 214–220 (NVVEFQR). ATP is bound by residues 256-260 (KGEVD) and 275-284 (GSPRRCGGQG). (6S)-NADPHX is bound at residue Asp285.

The protein belongs to the NnrD/CARKD family. Mg(2+) is required as a cofactor.

The enzyme catalyses (6S)-NADHX + ATP = ADP + phosphate + NADH + H(+). The catalysed reaction is (6S)-NADPHX + ATP = ADP + phosphate + NADPH + H(+). Functionally, catalyzes the dehydration of the S-form of NAD(P)HX at the expense of ATP, which is converted to ADP. Together with NAD(P)HX epimerase, which catalyzes the epimerization of the S- and R-forms, the enzyme allows the repair of both epimers of NAD(P)HX, a damaged form of NAD(P)H that is a result of enzymatic or heat-dependent hydration. The polypeptide is ATP-dependent (S)-NAD(P)H-hydrate dehydratase (Ciona intestinalis (Transparent sea squirt)).